We begin with the raw amino-acid sequence, 284 residues long: Tryptophan 2,3-dioxygenase (284 aa).

Residues 53–57 (FIVQH), Y115, and R119 each bind substrate. H242 lines the heme pocket. T256 lines the substrate pocket.

The protein belongs to the tryptophan 2,3-dioxygenase family. As to quaternary structure, homotetramer. Heme is required as a cofactor.

The enzyme catalyses L-tryptophan + O2 = N-formyl-L-kynurenine. It functions in the pathway amino-acid degradation; L-tryptophan degradation via kynurenine pathway; L-kynurenine from L-tryptophan: step 1/2. Functionally, heme-dependent dioxygenase that catalyzes the oxidative cleavage of the L-tryptophan (L-Trp) pyrrole ring and converts L-tryptophan to N-formyl-L-kynurenine. Catalyzes the oxidative cleavage of the indole moiety. This is Tryptophan 2,3-dioxygenase from Bordetella parapertussis (strain 12822 / ATCC BAA-587 / NCTC 13253).